The primary structure comprises 258 residues: Isoprenyl transferase (258 aa).

Asp-38 is an active-site residue. Position 38 (Asp-38) interacts with Mg(2+). Residues 39–42, Trp-43, Arg-51, His-55, and 83–85 each bind substrate; these read GNGR and STE. Asn-86 functions as the Proton acceptor in the catalytic mechanism. Residues Trp-87, Arg-89, Arg-206, and 212 to 214 contribute to the substrate site; that span reads RIS. Glu-225 contributes to the Mg(2+) binding site.

This sequence belongs to the UPP synthase family. As to quaternary structure, homodimer. Mg(2+) is required as a cofactor.

Catalyzes the condensation of isopentenyl diphosphate (IPP) with allylic pyrophosphates generating different type of terpenoids. The chain is Isoprenyl transferase from Bacillus anthracis.